The sequence spans 498 residues: Peptidase inhibitor 16 (498 aa).

The first 29 residues, 1-29 (MHGSCSPWVMLPPPLLLLLLLIATGPTTA), serve as a signal peptide directing secretion. One can recognise an SCP domain in the interval 39–167 (VDLHNQYRAQ…ANIHLLVCNY (129 aa)). Residue Asn116 is glycosylated (N-linked (GlcNAc...) asparagine). 3 disordered regions span residues 204-277 (NPEK…GPSS), 317-407 (PKSM…SPLS), and 419-467 (ERGG…ENPE). 2 stretches are compositionally biased toward polar residues: residues 218–277 (VPST…GPSS) and 344–353 (LTESGESVPQ). The span at 367 to 380 (PEAILPEAEAAPTE) shows a compositional bias: low complexity. A compositionally biased stretch (basic and acidic residues) spans 383 to 397 (VELREPEAESPKAES). The span at 437 to 447 (SLPTFPSASGN) shows a compositional bias: polar residues. A glycan (N-linked (GlcNAc...) asparagine) is linked at Asn447.

Belongs to the CRISP family. In terms of assembly, interacts with PSP94/MSMB. Post-translationally, N-glycosylated. As to expression, expressed strongly in aorta and skin, and weakly in adipose tissue (at protein level). In heart, found in the extracellular space surrounding cardiomyocytes (at protein level).

The protein localises to the secreted. May inhibit cardiomyocyte growth. This Mus musculus (Mouse) protein is Peptidase inhibitor 16 (Pi16).